The following is a 525-amino-acid chain: Packaging protein UL32 homolog (525 aa).

Residues Met-1 to Asn-12 show a composition bias toward polar residues. Residues Met-1 to Ser-20 are disordered. Zn(2+) contacts are provided by Cys-95, Cys-98, His-173, Cys-179, Cys-255, Cys-256, Cys-357, Cys-360, His-427, Cys-434, Cys-473, and His-510. Zinc finger stretches follow at residues Cys-95–Cys-179, Cys-255–His-510, and Cys-357–Cys-434.

It belongs to the herpesviridae UL32 protein family.

The protein resides in the host cytoplasm. It is found in the host nucleus. Functionally, plays a role in efficient localization of neo-synthesized capsids to nuclear replication compartments, thereby controlling cleavage and packaging of virus genomic DNA. The protein is Packaging protein UL32 homolog of Epstein-Barr virus (strain B95-8) (HHV-4).